Here is a 66-residue protein sequence, read N- to C-terminus: Large ribosomal subunit protein bL35 (66 aa).

The span at 1 to 14 (MPKMKTKSAAKKRF) shows a compositional bias: basic residues. A disordered region spans residues 1–34 (MPKMKTKSAAKKRFSMTATGKVKAGPAGKRHGMI).

Belongs to the bacterial ribosomal protein bL35 family.

The polypeptide is Large ribosomal subunit protein bL35 (Paracoccus denitrificans (strain Pd 1222)).